We begin with the raw amino-acid sequence, 406 residues long: 4-hydroxy-3-methylbut-2-en-1-yl diphosphate synthase (flavodoxin) (406 aa).

[4Fe-4S] cluster is bound by residues Cys-297, Cys-300, Cys-343, and Glu-350.

Belongs to the IspG family. It depends on [4Fe-4S] cluster as a cofactor.

It catalyses the reaction (2E)-4-hydroxy-3-methylbut-2-enyl diphosphate + oxidized [flavodoxin] + H2O + 2 H(+) = 2-C-methyl-D-erythritol 2,4-cyclic diphosphate + reduced [flavodoxin]. It participates in isoprenoid biosynthesis; isopentenyl diphosphate biosynthesis via DXP pathway; isopentenyl diphosphate from 1-deoxy-D-xylulose 5-phosphate: step 5/6. Functionally, converts 2C-methyl-D-erythritol 2,4-cyclodiphosphate (ME-2,4cPP) into 1-hydroxy-2-methyl-2-(E)-butenyl 4-diphosphate. The polypeptide is 4-hydroxy-3-methylbut-2-en-1-yl diphosphate synthase (flavodoxin) (Thermus thermophilus (strain ATCC 27634 / DSM 579 / HB8)).